The primary structure comprises 341 residues: Holliday junction branch migration complex subunit RuvB (341 aa).

The large ATPase domain (RuvB-L) stretch occupies residues 1-182; sequence MTDADPTLRP…FGIPTRLLFY (182 aa). Residues leucine 21, arginine 22, glycine 63, lysine 66, threonine 67, threonine 68, 129-131, arginine 172, tyrosine 182, and arginine 219 each bind ATP; that span reads EDF. Threonine 67 contributes to the Mg(2+) binding site. The small ATPAse domain (RuvB-S) stretch occupies residues 183-253; sequence TVDELFEIVS…LADHALTRLG (71 aa). A head domain (RuvB-H) region spans residues 256 to 341; the sequence is QLGLDGADRR…RPPGQSDLFG (86 aa). DNA contacts are provided by arginine 292, arginine 311, and arginine 316.

It belongs to the RuvB family. In terms of assembly, homohexamer. Forms an RuvA(8)-RuvB(12)-Holliday junction (HJ) complex. HJ DNA is sandwiched between 2 RuvA tetramers; dsDNA enters through RuvA and exits via RuvB. An RuvB hexamer assembles on each DNA strand where it exits the tetramer. Each RuvB hexamer is contacted by two RuvA subunits (via domain III) on 2 adjacent RuvB subunits; this complex drives branch migration. In the full resolvosome a probable DNA-RuvA(4)-RuvB(12)-RuvC(2) complex forms which resolves the HJ.

It is found in the cytoplasm. The catalysed reaction is ATP + H2O = ADP + phosphate + H(+). The RuvA-RuvB-RuvC complex processes Holliday junction (HJ) DNA during genetic recombination and DNA repair, while the RuvA-RuvB complex plays an important role in the rescue of blocked DNA replication forks via replication fork reversal (RFR). RuvA specifically binds to HJ cruciform DNA, conferring on it an open structure. The RuvB hexamer acts as an ATP-dependent pump, pulling dsDNA into and through the RuvAB complex. RuvB forms 2 homohexamers on either side of HJ DNA bound by 1 or 2 RuvA tetramers; 4 subunits per hexamer contact DNA at a time. Coordinated motions by a converter formed by DNA-disengaged RuvB subunits stimulates ATP hydrolysis and nucleotide exchange. Immobilization of the converter enables RuvB to convert the ATP-contained energy into a lever motion, pulling 2 nucleotides of DNA out of the RuvA tetramer per ATP hydrolyzed, thus driving DNA branch migration. The RuvB motors rotate together with the DNA substrate, which together with the progressing nucleotide cycle form the mechanistic basis for DNA recombination by continuous HJ branch migration. Branch migration allows RuvC to scan DNA until it finds its consensus sequence, where it cleaves and resolves cruciform DNA. In Ruegeria pomeroyi (strain ATCC 700808 / DSM 15171 / DSS-3) (Silicibacter pomeroyi), this protein is Holliday junction branch migration complex subunit RuvB.